A 2067-amino-acid polypeptide reads, in one-letter code: MAVTSFPADSLASMESVKQTVRSTSTCSAATVLSLQTLFRSAGEMETTLRRTARGTKATATNATASSRAKTTRTKSTSTSTTRTKTPAQDVSTFTSTSASLADTRLSNQEKLVLATEVFNSTLKTLSDAVKTVMSISKEKKDASPTKRGTTTKGRVKTSQPDLTDNENGVSAVAECARLSLSCLRMLRTDAMVDGGLPNLQLEQGACVLAGRLLALGLNDAAYKELRGLKRRIQSYLEELPSGRKRTGRKDAEDGEETAKERMSDLLSFSDIANARSIHGLLVSFQSNALRLIAAEKRPATVQKLVPSLQLTDESSPANVIMASIDSGALTKDKAAVQLQLLSSTVLSLSASGASTGKERLRPSIVLSLQLLALEIRCMSWKLSGHACEDNKEMWDPLARYIGAFAQATKSIEKAEFAVIYKNIVRLQSAFSKTQNCATRSTDNLSVARIATILGQLAQDAGCFDEALQLFTESLNPLSSSQCLGMATVRCKIAALHFQAFKSSVKLPGDVSDAVSQATAALSISLKGSSHDLDELLVQAAKLKKLAMGWFGDLISKGQGSQCENVVFPRICEFLSSFVRFLRRYIGRRPENDELNDREIFQKRIDAAQNIVLAAVDSTIAIGKLSVMSQRPAWEETVSTLLDCQRLLATIEPFDEVDVATADSIDQALVKLSNLFWSRYLKEKEAGKNARELLPLLKQSAYLLSGCSPSQRATGFAPLKYERLAHTYIEGNMVSEAEVAFRQSITDHIAAGALDKIASSTDGCFPHQMNQDPKRSGFTLGRVLSAYLKVKLRNKRSAVNEIFDDETLPSVQRGHVLEWQLGILTEIHGTSNNDNVFRSVFAEVATRLFKVYPAEQHPVRRLRVLLSGLRFALEQPGFLDSSLLQRFADEGRKGLDDDDYQDDDDIKSLAVYLKNSVRLTLGLQQGSLGPEELELIVSTWTSILRFCHDLKSLVACVGNVEYFLLQMKAVVDYTEIHGLWKFQLSTLELVLRVTELHGAGTFSEAIIVLSRLVLQYCRMGFCIKAHSLLSRADGYIANHEVSCLARLSYELARVGFLLETGDNQKAATVLSTARMIYEKHQATEDLDACSVLTKISWERLVADAAFMSSRLSFAQGSIKDALYFAKLSVRLNCRIWAKVEKLAQKKQEKAVVGDSSELEIVVEGMAKLEVSQTSSTYSQGAPFWPHIGSHHSSLLHLANLSAHHGLFQDAIYYGEQALKINKSLNANVRLIASQAHLGSHWILGGHISEGQQLLASAKALSDKLGSSIELVSLRLSLAALHRVEGDYRNEYRTLREAEKLLGGLFESQADSADIPDLEEKMDKLRVRPKSRSTRQPATTATRRTRSATTSARSTPKPPQSVEATNASNTLLQMKSEILLQQAASLRAQREFEAASTLLSDARKFAVTRNSRISVHLGESEHLLADAIRNFANHAVYCVLPESTISLPSLEPKAASESSSKSATRKTRAPTRGTRTKAQAATEDFSVMLSKAGDCLNGIFDTATQLGSTLDSHSASRLMSRISMLSHVTASPNHILWPHSPANMNEVGRIGAFARERAAIRIDKRLADYCDPLLWPRSELESEGVSPDFTKEYVDILPDNWNVLSLSLSADRAEFVVSRLHRGCSPFLLRLPLRRGNSEDEEEQFTFEDGRDEMKELIRLANESAHAAKLQVDRQMKKEWWKNREALDRRMENLLQNIENVWFGGFRGIFSPIPLCEKSLARFASAFENILENHLPSRRKGSRAQGPKLTLHPNVLELFVGVKGLDDQEDPEDTLMDLLYFVVDILQFQGERNAYDEVDFDMMVVETLDAVRAYHEAAKDQATQRPNNTVLVLDKSLHLFPWESLPCLQGLPVCRVPSLECLRDRVLHLRSGKQSALSIDRRNGTYILNPTGDLKTTQETFEKDLSSLKGWTGMVNRQPTEDEFKDSLQSKSLFLYFGHGSGAQYIRGRTVKRLDRCAVAFLMGCSSGTLTEAGEYEPYGTPMNYLQAGSPALVATLWDVTDKDIDRFAKATFEHWGLIGNGHRGNEGIGEAGVALDAAVSQSRGACVLKYLNGAAPVVYGVPGVFLH.

Disordered stretches follow at residues 51-91 (RTAR…AQDV), 140-167 (KKDA…TDNE), 1316-1363 (DLEE…SVEA), and 1449-1478 (LEPK…TKAQ). A compositionally biased stretch (low complexity) spans 55-86 (GTKATATNATASSRAKTTRTKSTSTSTTRTKT). Composition is skewed to low complexity over residues 1333–1354 (TRQP…ARST) and 1449–1461 (LEPK…SSKS). In terms of domain architecture, Peptidase C50 spans 1880–1975 (RRNGTYILNP…SGTLTEAGEY (96 aa)). Cysteine 1964 is a catalytic residue.

Its subcellular location is the nucleus. The enzyme catalyses All bonds known to be hydrolyzed by this endopeptidase have arginine in P1 and an acidic residue in P4. P6 is often occupied by an acidic residue or by a hydroxy-amino-acid residue, the phosphorylation of which enhances cleavage.. Its function is as follows. Required for nuclear division. Could function in the mitotic spindle. This is Separin (bimB) from Emericella nidulans (strain FGSC A4 / ATCC 38163 / CBS 112.46 / NRRL 194 / M139) (Aspergillus nidulans).